A 124-amino-acid polypeptide reads, in one-letter code: MRDADDRRAALWQGRMAERAAILALRLKRYAILERGYRIHGGEIDIIARRGDTIAFVEVKARPTMDGALQSITPQKRRRICRAARVWLASHPYAAAMTLRGDAVFVAPWRWPHHVAAAVELDFG.

This sequence belongs to the UPF0102 family.

This Methylocella silvestris (strain DSM 15510 / CIP 108128 / LMG 27833 / NCIMB 13906 / BL2) protein is UPF0102 protein Msil_0293.